We begin with the raw amino-acid sequence, 286 residues long: uncharacterized protein (286 aa).

The tat-type signal signal peptide spans 1–31 (MKKMSRRQFLKGMFGALAAGALTAGGGYGYA). A divalent metal cation-binding residues include Asp65, His67, Asp97, Asn130, His221, and His223.

Belongs to the metallophosphoesterase superfamily. It depends on a divalent metal cation as a cofactor. Predicted to be exported by the Tat system. The position of the signal peptide cleavage has not been experimentally proven.

This is an uncharacterized protein from Bacillus subtilis (strain 168).